The following is a 476-amino-acid chain: Glycogen synthase (476 aa).

Residue Lys-15 participates in ADP-alpha-D-glucose binding.

This sequence belongs to the glycosyltransferase 1 family. Bacterial/plant glycogen synthase subfamily.

The catalysed reaction is [(1-&gt;4)-alpha-D-glucosyl](n) + ADP-alpha-D-glucose = [(1-&gt;4)-alpha-D-glucosyl](n+1) + ADP + H(+). It participates in glycan biosynthesis; glycogen biosynthesis. In terms of biological role, synthesizes alpha-1,4-glucan chains using ADP-glucose. This Yersinia pestis bv. Antiqua (strain Antiqua) protein is Glycogen synthase.